A 268-amino-acid chain; its full sequence is Phosphonates import ATP-binding protein PhnC (268 aa).

Residues 11–254 enclose the ABC transporter domain; it reads LHAEAVTKRF…EVMAIYQRAE (244 aa). Residue 43–50 participates in ATP binding; the sequence is GLSGSGKS.

It belongs to the ABC transporter superfamily. Phosphonates importer (TC 3.A.1.9.1) family. The complex is composed of two ATP-binding proteins (PhnC), two transmembrane proteins (PhnE) and a solute-binding protein (PhnD).

The protein localises to the cell membrane. The enzyme catalyses phosphonate(out) + ATP + H2O = phosphonate(in) + ADP + phosphate + H(+). In terms of biological role, part of the ABC transporter complex PhnCDE involved in phosphonates import. Responsible for energy coupling to the transport system. In Nocardia farcinica (strain IFM 10152), this protein is Phosphonates import ATP-binding protein PhnC.